A 995-amino-acid chain; its full sequence is Zinc finger protein ZFPM1 (995 aa).

Over residues 1 to 14 the composition is skewed to basic residues; that stretch reads MSRRKQSNPRQIKR. The tract at residues 1 to 103 is disordered; sequence MSRRKQSNPR…EAAMASPWSG (103 aa). Residues 15–36 show a composition bias toward basic and acidic residues; the sequence is SLRDMEAGEEAKAMDSSPKEQE. Acidic residues-rich tracts occupy residues 67–78 and 86–95; these read SPEDPEDMEGQE and EEKEEKEEEA. 2 positions are modified to phosphoserine: Ser-99 and Ser-143. The CCHC FOG-type 1 zinc-finger motif lies at 249-282; that stretch reads VINKDVFPCKDCGIWYRSERNLQAHLLYYCASRQ. Zn(2+) contacts are provided by Cys-257, Cys-260, His-273, and Cys-278. Ser-286 carries the post-translational modification Phosphoserine. C2H2-type zinc fingers lie at residues 303 to 327, 333 to 355, and 361 to 384; these read RVCP…MRSH, FVCL…LKVH, and GVCH…VTNH. Positions 343–354 are interaction with TACC3; it reads TTKANCERHLKV. A phosphoserine mark is found at Ser-397, Ser-497, and Ser-500. The disordered stretch occupies residues 424-526; it reads PLVPADKAPT…SSPGPGELTM (103 aa). Residues 509-525 are compositionally biased toward low complexity; that stretch reads ELSSPTPGSSPGPGELT. Residues 584–617 form a CCHC FOG-type 2 zinc finger; that stretch reads FSGTKGATCFECEITFNNINNFYVHKRLYCSGRR. 4 residues coordinate Zn(2+): Cys-592, Cys-595, His-608, and Cys-613. Residues 616 to 694 are disordered; it reads RRAPEDPPTV…SVDDAEDDPS (79 aa). Low complexity predominate over residues 630 to 652; the sequence is AATGPARAPAGAAAEPDPSRSSP. Ser-651 and Ser-684 each carry phosphoserine. Residues 690-723 form a CCHC FOG-type 3 zinc finger; that stretch reads EDDPSRTLCEACNIRFSRHETYTVHKRYYCASRH. Cys-698, Cys-701, His-714, and Cys-719 together coordinate Zn(2+). The segment at 721–827 is disordered; the sequence is SRHDPPPRRP…PRRQSPDAPT (107 aa). Pro residues-rich tracts occupy residues 728-740 and 764-779; these read RRPP…PGPA and GAPP…PVVP. Residues 785–800 are compositionally biased toward low complexity; the sequence is LPSSPRPGSASAGPAP. The residue at position 803 (Ser-803) is a Phosphoserine. Residues 811-817 form an interaction with CTBP2 region; the sequence is PIDLSKR. Position 822 is a phosphoserine (Ser-822). The CCHC FOG-type 4 zinc-finger motif lies at 830 to 863; it reads PALADYHECTACRVSFHSLEAYLAHKKYSCPAAP. Residues Cys-838, Cys-841, His-854, and Cys-859 each contribute to the Zn(2+) site. A C2H2-type 4 zinc finger spans residues 868–891; the sequence is ALCPYCPPNGRVRGDLVEHLRQAH. The interval 892–960 is disordered; that stretch reads GLQVAKPAAS…APAPAPGGGG (69 aa). The segment covering 908–922 has biased composition (basic and acidic residues); it reads TPAERAPRDSPDGRA. A phosphoserine mark is found at Ser-925 and Ser-927. Residues 957-990 form a CCHC FOG-type 5 zinc finger; that stretch reads GGGGGHRYCRLCNIRFSSLSTFIAHKKYYCSSHA. Residues Cys-965, Cys-968, His-981, and Cys-986 each contribute to the Zn(2+) site.

It belongs to the FOG (Friend of GATA) family. Interacts with the N-terminal zinc-finger of GATA1, GATA2 and GATA3. Interacts with corepressor CTBP2; this interaction is however not essential for corepressor activity in erythropoiesis. Interacts with TACC3. In terms of tissue distribution, mainly expressed in hematopoietic tissues. Expressed in the spleen, a primary site of hematopoiesis in the adult mouse, as well as in the liver and testis, but not in the heart, brain, lung, kidney, or skeletal muscle. Among hematopoietic cell lines, it is strongly expressed in erythroid and megakaryocytic cell lines. Expressed at low level in several lymphoid and early myeloid cell lines. Not expressed in mast cell and macrophage lines. Expressed in the heart, where it colocalizes with GATA4, GATA5 and GATA6.

Its subcellular location is the nucleus. In terms of biological role, transcription regulator that plays an essential role in erythroid and megakaryocytic cell differentiation. Essential cofactor that acts via the formation of a heterodimer with transcription factors of the GATA family GATA1, GATA2 and GATA3. Such heterodimer can both activate or repress transcriptional activity, depending on the cell and promoter context. The heterodimer formed with GATA proteins is essential to activate expression of genes such as NFE2, ITGA2B, alpha- and beta-globin, while it represses expression of KLF1. May be involved in regulation of some genes in gonads. May also be involved in cardiac development, in a non-redundant way with ZFPM2/FOG2. The sequence is that of Zinc finger protein ZFPM1 (Zfpm1) from Mus musculus (Mouse).